The chain runs to 377 residues: Nitric oxide reductase FlRd-NAD(+) reductase (377 aa).

This sequence belongs to the FAD-dependent oxidoreductase family. The cofactor is FAD.

It is found in the cytoplasm. It catalyses the reaction 2 reduced [nitric oxide reductase rubredoxin domain] + NAD(+) + H(+) = 2 oxidized [nitric oxide reductase rubredoxin domain] + NADH. Its pathway is nitrogen metabolism; nitric oxide reduction. Its function is as follows. One of at least two accessory proteins for anaerobic nitric oxide (NO) reductase. Reduces the rubredoxin moiety of NO reductase. The chain is Nitric oxide reductase FlRd-NAD(+) reductase from Salmonella dublin (strain CT_02021853).